A 417-amino-acid chain; its full sequence is Inactive GDSL esterase/lipase-like protein 25 (417 aa).

A signal peptide spans 1–50 (MLLIPSFTANSNEPPPSKLSLSDLSMAILKSHFFLLFPLLLLHFHTVSFA). N-linked (GlcNAc...) asparagine glycans are attached at residues Asn160, Asn308, and Asn311. The active site involves His331.

The protein belongs to the 'GDSL' lipolytic enzyme family. As to quaternary structure, interacts with the PYK10 complex and TGG2, but not with TGG1 or PEN2. In terms of tissue distribution, expressed throughout the seedling, rosette leaves, roots, inflorescence and imbibed seed, but not in pollen.

The protein resides in the vacuole. It localises to the endoplasmic reticulum. In terms of biological role, involved in organization of the endomembrane system and is required for endoplasmic reticulum morphology and organelle distribution. May act by inhibiting the formation of PYK10 complex by binding to GLL23 and exporting it from the ER. Required for proper subcellular localization of myrosinase TGG2. Has no lipase or esterase activity. The polypeptide is Inactive GDSL esterase/lipase-like protein 25 (MVP1) (Arabidopsis thaliana (Mouse-ear cress)).